A 96-amino-acid chain; its full sequence is Co-chaperonin GroES (96 aa).

It belongs to the GroES chaperonin family. As to quaternary structure, heptamer of 7 subunits arranged in a ring. Interacts with the chaperonin GroEL.

The protein resides in the cytoplasm. Together with the chaperonin GroEL, plays an essential role in assisting protein folding. The GroEL-GroES system forms a nano-cage that allows encapsulation of the non-native substrate proteins and provides a physical environment optimized to promote and accelerate protein folding. GroES binds to the apical surface of the GroEL ring, thereby capping the opening of the GroEL channel. The sequence is that of Co-chaperonin GroES from Holospora obtusa.